We begin with the raw amino-acid sequence, 301 residues long: Zinc finger protein 346 (301 aa).

Matrin-type zinc fingers lie at residues 55 to 85 (SQCK…KVRR) and 117 to 141 (KACS…GKVH). Zn(2+)-binding residues include Cys-57, Cys-60, His-73, His-79, Cys-119, Cys-122, His-135, and His-141. The disordered stretch occupies residues 151–177 (GSQTPALPQPEAQAKKDDGMQGPAEQD). 2 Matrin-type zinc fingers span residues 180–210 (RFCS…HMNK) and 230–257 (YPCT…HKNH). A disordered region spans residues 250-283 (SGSKHKNHAKPKKGPNAFAPPPDNYQPDYQYPTN). Positions 251–262 (GSKHKNHAKPKK) are enriched in basic residues.

It localises to the nucleus. It is found in the cytoplasm. Functionally, binds preferentially to dsRNA, but also to RNA-DNA hybrids. This is Zinc finger protein 346 from Danio rerio (Zebrafish).